A 77-amino-acid polypeptide reads, in one-letter code: Large ribosomal subunit protein bL28 (77 aa).

This sequence belongs to the bacterial ribosomal protein bL28 family.

The polypeptide is Large ribosomal subunit protein bL28 (Paracidovorax citrulli (strain AAC00-1) (Acidovorax citrulli)).